A 227-amino-acid chain; its full sequence is Nudix hydrolase 27, chloroplastic (227 aa).

The transit peptide at 1–44 directs the protein to the chloroplast; that stretch reads MAVKASGFIGKSAISVHLDFSSFPVKFSCLKQFSVSSPKPLVVL. The 148-residue stretch at 61 to 208 folds into the Nudix hydrolase domain; the sequence is GYRKNVGICL…KRPVYEHVIK (148 aa). The Nudix box motif lies at 94 to 115; sequence GGADEGEDLRNAAFRELREETG. Positions 109 and 113 each coordinate Mn(2+).

The protein belongs to the Nudix hydrolase family. The cofactor is Mg(2+). Requires Mn(2+) as cofactor. As to expression, expressed in roots, leaves, stems and inflorescences.

It localises to the plastid. Its subcellular location is the chloroplast. Its function is as follows. Mediates the hydrolysis of some nucleoside diphosphate derivatives. Can use diadenosine 5',5'''-P(1)P(5) pentaphosphate (Ap(5)A) as substrates. The chain is Nudix hydrolase 27, chloroplastic (NUDT27) from Arabidopsis thaliana (Mouse-ear cress).